A 361-amino-acid polypeptide reads, in one-letter code: S-adenosylmethionine-dependent nucleotide dehydratase RSAD2 (361 aa).

Residues 69–289 (PTTPTSVNYH…LERHKEVSCL (221 aa)) enclose the Radical SAM core domain. 3 residues coordinate [4Fe-4S] cluster: Cys-83, Cys-87, and Cys-90. Lys-197 carries the post-translational modification N6-acetyllysine. Lys-206 is covalently cross-linked (Glycyl lysine isopeptide (Lys-Gly) (interchain with G-Cter in ubiquitin)).

It belongs to the radical SAM superfamily. RSAD2 family. As to quaternary structure, homodimer. Interacts with IRAK1 and TRAF6. Interacts with FPPS. Interacts with HADHB. Interacts (via C-terminus) with VAPA/VAP33 (via C-terminus). (Microbial infection) Interacts with human cytomegalovirus/HHV-5 protein vMIA/UL37; this interaction results in RSAD2/viperin relocalization from the endoplasmic reticulum to the mitochondria. In terms of assembly, (Microbial infection) Interacts (via N-terminus) with enterovirus A71 protein 2C; this interaction inhibits viral replication. As to quaternary structure, (Microbial infection) Interacts with herpes simplex virus 1/HHV-1 glycoprotein D; this interaction inhibits HHV-1 replication by facilitating IRF7-mediated IFN-beta production. Requires [4Fe-4S] cluster as cofactor. In terms of processing, acetylated by HAT1. HAT1-mediated acetylation of Lys-197 in turn recruits UBE4A that stimulates RSAD2 polyubiquitination leading to proteasomal degradation. 'Lys-6'-linked polyubiquitination at Lys-206 leads to RSAD2 protein degradation.

The protein localises to the endoplasmic reticulum membrane. The protein resides in the golgi apparatus. Its subcellular location is the endoplasmic reticulum. It is found in the lipid droplet. It localises to the mitochondrion. The protein localises to the mitochondrion inner membrane. The protein resides in the mitochondrion outer membrane. It catalyses the reaction CTP + AH2 + S-adenosyl-L-methionine = 3'-deoxy-3',4'-didehydro-CTP + 5'-deoxyadenosine + L-methionine + A + H2O + H(+). IRAK1 and TRAF6 synergistically activate RSAD2 increasing its activity with CTP as substrate about 10-fold. In terms of biological role, interferon-inducible antiviral protein which plays a major role in the cell antiviral state induced by type I and type II interferon. Catalyzes the conversion of cytidine triphosphate (CTP) to 3'-deoxy-3',4'-didehydro-CTP (ddhCTP) via a SAM-dependent radical mechanism. In turn, ddhCTP acts as a chain terminator for the RNA-dependent RNA polymerases from multiple viruses and directly inhibits viral replication. Therefore, inhibits a wide range of DNA and RNA viruses, including human cytomegalovirus (HCMV), hepatitis C virus (HCV), west Nile virus (WNV), dengue virus, sindbis virus, influenza A virus, sendai virus, vesicular stomatitis virus (VSV), zika virus, and human immunodeficiency virus (HIV-1). Also promotes TLR7 and TLR9-dependent production of IFN-beta production in plasmacytoid dendritic cells (pDCs) by facilitating 'Lys-63'-linked ubiquitination of IRAK1 by TRAF6. Plays a role in CD4+ T-cells activation and differentiation. Facilitates T-cell receptor (TCR)-mediated GATA3 activation and optimal T-helper 2 (Th2) cytokine production by modulating NFKB1 and JUNB activities. Can inhibit secretion of soluble proteins. The chain is S-adenosylmethionine-dependent nucleotide dehydratase RSAD2 from Homo sapiens (Human).